Consider the following 447-residue polypeptide: Cysteine--tRNA ligase (447 aa).

C28 lines the Zn(2+) pocket. The 'HIGH' region motif lies at 30 to 40; sequence PTVYNYIHIGN. Zn(2+) is bound by residues C211, H236, and E240. The short motif at 268–272 is the 'KMSKS' region element; that stretch reads KMSKS. Residue K271 participates in ATP binding.

This sequence belongs to the class-I aminoacyl-tRNA synthetase family. In terms of assembly, monomer. The cofactor is Zn(2+).

Its subcellular location is the cytoplasm. It catalyses the reaction tRNA(Cys) + L-cysteine + ATP = L-cysteinyl-tRNA(Cys) + AMP + diphosphate. This Streptococcus agalactiae serotype III (strain NEM316) protein is Cysteine--tRNA ligase.